The following is a 67-amino-acid chain: DNA-directed RNA polymerase subunit omega (67 aa).

The protein belongs to the RNA polymerase subunit omega family. In terms of assembly, the RNAP catalytic core consists of 2 alpha, 1 beta, 1 beta' and 1 omega subunit. When a sigma factor is associated with the core the holoenzyme is formed, which can initiate transcription.

The catalysed reaction is RNA(n) + a ribonucleoside 5'-triphosphate = RNA(n+1) + diphosphate. Its function is as follows. Promotes RNA polymerase assembly. Latches the N- and C-terminal regions of the beta' subunit thereby facilitating its interaction with the beta and alpha subunits. The chain is DNA-directed RNA polymerase subunit omega from Burkholderia multivorans (strain ATCC 17616 / 249).